The sequence spans 303 residues: Probable cell division protein WhiA (303 aa).

Positions serine 272–leucine 303 form a DNA-binding region, H-T-H motif.

This sequence belongs to the WhiA family.

Functionally, involved in cell division and chromosome segregation. The protein is Probable cell division protein WhiA of Streptococcus equi subsp. zooepidemicus (strain MGCS10565).